A 365-amino-acid polypeptide reads, in one-letter code: Succinyl-diaminopimelate desuccinylase (365 aa).

H64 is a Zn(2+) binding site. D66 is a catalytic residue. Residue D95 coordinates Zn(2+). The active-site Proton acceptor is E125. Residues E126, E154, and H339 each contribute to the Zn(2+) site.

Belongs to the peptidase M20A family. DapE subfamily. In terms of assembly, homodimer. Zn(2+) is required as a cofactor. Requires Co(2+) as cofactor.

It catalyses the reaction N-succinyl-(2S,6S)-2,6-diaminopimelate + H2O = (2S,6S)-2,6-diaminopimelate + succinate. It functions in the pathway amino-acid biosynthesis; L-lysine biosynthesis via DAP pathway; LL-2,6-diaminopimelate from (S)-tetrahydrodipicolinate (succinylase route): step 3/3. Functionally, catalyzes the hydrolysis of N-succinyl-L,L-diaminopimelic acid (SDAP), forming succinate and LL-2,6-diaminopimelate (DAP), an intermediate involved in the bacterial biosynthesis of lysine and meso-diaminopimelic acid, an essential component of bacterial cell walls. In Campylobacter curvus (strain 525.92), this protein is Succinyl-diaminopimelate desuccinylase.